Consider the following 521-residue polypeptide: MALMILPFIGALSVSESLVALVTVCLVYLIIKSFQANIPEGLSRLPGPKPLPIIGNVLEVGSRPYLSLTEMSKRYGNVFQIQIGMRPVVVLSGNETVRQALIKQGDEFAGRPDLYSFRFISEGKSLAFSTDQAGVWRARRKLAYSALRSFSTLEGTTPEYSCVLEEHISKEAEYLIKQLDTVMKADGSFDPFRYIVVSVANVICGMCFGRRYDHHDRELLSLVNLSDEFGQVVGSGNPADFIPILQYLPNKTMKKFVNINDRFISFVQKIVSEHYATFNKDNIRDITDSLIDHCEDRKLDENANVQMSDEKVVGIVNDLFGAGLDTISTALSWSVMYLVAYPEIQERLYQELKENVGLDRTPVLSDRNNLPLLEAFILEIFRHSSFLPFTIPHCTTKDTSLNGYYIPKDTCVFINQWQINHDPELWKEPSSFNPDRFLSADGTEVNKVDGEKVMVFGLGKRRCIGEVIARNEVYMFLAILIQKLHFYNLPGEPLDMTPEYGLTMKHKRCHLRATVRVRSDH.

Residue Phe229 participates in substrate binding. A heme-binding site is contributed by Cys463.

The protein belongs to the cytochrome P450 family. Requires heme as cofactor.

It is found in the endoplasmic reticulum membrane. The protein localises to the microsome membrane. It carries out the reaction an organic molecule + reduced [NADPH--hemoprotein reductase] + O2 = an alcohol + oxidized [NADPH--hemoprotein reductase] + H2O + H(+). In terms of biological role, cytochromes P450 are a group of heme-thiolate monooxygenases. They oxidize a variety of structurally unrelated compounds, including steroids, fatty acids, and xenobiotics. The chain is Cytochrome P450 1A1 (cyp1a1) from Chelon auratus (Golden grey mullet).